A 951-amino-acid polypeptide reads, in one-letter code: Kinase suppressor of Ras 2 (951 aa).

Positions 237–298 (PPPPPLESGH…PGTPPPSSRK (62 aa)) are disordered. The span at 260-274 (RTPPRTPNIVTTVTP) shows a compositional bias: low complexity. Phosphothreonine is present on residues T273 and T277. Residues 413 to 457 (KHRFSTKYWMSQTCTVCGKGMLFGLKCKNCKLKCHNKCTKEAPPC) form a Phorbol-ester/DAG-type zinc finger. Zn(2+)-binding residues include H414, C426, C429, C439, C442, H447, C450, and C457. S475 carries the phosphoserine; by MARK3 modification. 2 disordered regions span residues 489-559 (RYSD…QKKN) and 614-634 (EPTSENEESHNEAEESEDEFE). The segment covering 494-503 (HISQTLPKTN) has biased composition (polar residues). T498 is modified (phosphothreonine). Residues 518 to 531 (SSSNPSSTTSSTPS) are compositionally biased toward low complexity. Pro residues predominate over residues 532–552 (SPAPPLPPSATPPSPLHPSPQ). Residues 667-932 (LEIGELIGKG…TKLMDMLEKL (266 aa)) form the Protein kinase domain. 673–681 (IGKGRFGQV) is a binding site for ATP. The active-site Proton donor/acceptor is D787. ATP contacts are provided by K789 and D804.

It belongs to the protein kinase superfamily. TKL Ser/Thr protein kinase family. As to quaternary structure, heterodimerizes (via N-terminus) with BRAF (via N-terminus) in a MAP2K1/MEK1-dependent manner. Interacts with BRAF; this increases the low intrinsic protein kinase activity of KSR2. Interacts with MAP2K1, forming a heterodimer that can dimerize to form a heterotetramer. Interacts with MAP3K8, MAPK, RAS and RAF. Phosphorylated on Ser-475 by MARK3.

The protein localises to the cytoplasm. Its subcellular location is the membrane. The catalysed reaction is L-seryl-[protein] + ATP = O-phospho-L-seryl-[protein] + ADP + H(+). It catalyses the reaction L-threonyl-[protein] + ATP = O-phospho-L-threonyl-[protein] + ADP + H(+). Location-regulated scaffold connecting MEK to RAF. Has very low protein kinase activity and can phosphorylate MAP2K1 at several Ser and Thr residues with very low efficiency (in vitro). Acts as MAP2K1/MEK1-dependent allosteric activator of BRAF; upon binding to MAP2K1/MEK1, dimerizes with BRAF and promotes BRAF-mediated phosphorylation of MAP2K1/MEK1. Interaction with BRAF enhances KSR2-mediated phosphorylation of MAP2K1 (in vitro). Blocks MAP3K8 kinase activity and MAP3K8-mediated signaling. Acts as a negative regulator of MAP3K3-mediated activation of ERK, JNK and NF-kappa-B pathways, inhibiting MAP3K3-mediated interleukin-8 production. The polypeptide is Kinase suppressor of Ras 2 (Mus musculus (Mouse)).